Here is a 182-residue protein sequence, read N- to C-terminus: Bifunctional protein PyrR (182 aa).

Positions 97 to 109 (VVLVDDVIFRGRT) match the PRPP-binding motif.

It belongs to the purine/pyrimidine phosphoribosyltransferase family. PyrR subfamily.

The enzyme catalyses UMP + diphosphate = 5-phospho-alpha-D-ribose 1-diphosphate + uracil. Regulates the transcription of the pyrimidine nucleotide (pyr) operon in response to exogenous pyrimidines. In terms of biological role, also displays a weak uracil phosphoribosyltransferase activity which is not physiologically significant. The chain is Bifunctional protein PyrR from Synechococcus sp. (strain JA-2-3B'a(2-13)) (Cyanobacteria bacterium Yellowstone B-Prime).